Here is a 214-residue protein sequence, read N- to C-terminus: uncharacterized protein (214 aa).

Positions methionine 1–glycine 17 are cleaved as a signal peptide. Asparagine 88 and asparagine 139 each carry an N-linked (GlcNAc...) asparagine glycan.

Component of the acid-insoluble organic matrix of calcified layers of the shell (at protein level).

The protein resides in the secreted. This is an uncharacterized protein from Lottia gigantea (Giant owl limpet).